Consider the following 194-residue polypeptide: dITP/XTP pyrophosphatase (194 aa).

8-13 (TSNPGK) contacts substrate. Positions 38 and 67 each coordinate Mg(2+). Aspartate 67 acts as the Proton acceptor in catalysis. Substrate is bound by residues serine 68, 152–155 (FGYD), lysine 175, and 180–181 (HR).

Belongs to the HAM1 NTPase family. In terms of assembly, homodimer. It depends on Mg(2+) as a cofactor.

The catalysed reaction is XTP + H2O = XMP + diphosphate + H(+). The enzyme catalyses dITP + H2O = dIMP + diphosphate + H(+). It carries out the reaction ITP + H2O = IMP + diphosphate + H(+). Its function is as follows. Pyrophosphatase that catalyzes the hydrolysis of nucleoside triphosphates to their monophosphate derivatives, with a high preference for the non-canonical purine nucleotides XTP (xanthosine triphosphate), dITP (deoxyinosine triphosphate) and ITP. Seems to function as a house-cleaning enzyme that removes non-canonical purine nucleotides from the nucleotide pool, thus preventing their incorporation into DNA/RNA and avoiding chromosomal lesions. The sequence is that of dITP/XTP pyrophosphatase from Legionella pneumophila (strain Paris).